We begin with the raw amino-acid sequence, 353 residues long: Keratocan (353 aa).

The signal sequence occupies residues 1 to 21 (MMTLKVCPSLLLLFLVHSVWT). In terms of domain architecture, LRRNT spans 34 to 72 (EHWSHYTFECPQECFCPPSFPNALYCDNKGLKEIPAIPA). Disulfide bonds link C43/C49 and C47/C59. LRR repeat units follow at residues 73-94 (RIWY…PFVN), 97-118 (HLRW…SGVL), 123-143 (RLLY…PLPV), 144-165 (GLEQ…VFSN), 168-188 (NLTM…QSDT), 194-214 (SLMQ…SIPA), 215-236 (NTLQ…YFSA), and 239-259 (KVTF…PPNG). Residue N94 is glycosylated (N-linked (GlcNAc...) (keratan sulfate) asparagine). The N-linked (GlcNAc...) asparagine glycan is linked to N168. N223 carries an N-linked (GlcNAc...) (keratan sulfate) asparagine glycan. N-linked (GlcNAc...) (keratan sulfate) asparagine glycosylation occurs at N261. LRR repeat units lie at residues 264 to 283 (SILD…PINA) and 284 to 305 (HLEH…QICP). N299 carries N-linked (GlcNAc...) asparagine glycosylation. C304 and C344 are joined by a disulfide.

The protein belongs to the small leucine-rich proteoglycan (SLRP) family. SLRP class II subfamily. Cornea.

The protein resides in the secreted. It is found in the extracellular space. Its subcellular location is the extracellular matrix. Functionally, plays an important role in generating and maintaining a transparent matrix within the corneal stroma. The sequence is that of Keratocan (KERA) from Coturnix japonica (Japanese quail).